Reading from the N-terminus, the 359-residue chain is Putative transposase y4uE (359 aa).

2 disordered regions span residues 1–31 (MGDG…APGG) and 318–359 (HYAH…EEAA).

It belongs to the transposase 9 family.

The chain is Putative transposase y4uE from Sinorhizobium fredii (strain NBRC 101917 / NGR234).